Here is a 427-residue protein sequence, read N- to C-terminus: Mitochondrial distribution and morphology protein 10 (427 aa).

The span at S393 to S414 shows a compositional bias: low complexity. Residues S393–S427 are disordered.

It belongs to the MDM10 family. As to quaternary structure, component of the ER-mitochondria encounter structure (ERMES) or MDM complex, composed of mmm1, mdm10, mdm12 and mdm34. Associates with the mitochondrial outer membrane sorting assembly machinery SAM(core) complex.

The protein localises to the mitochondrion outer membrane. In terms of biological role, component of the ERMES/MDM complex, which serves as a molecular tether to connect the endoplasmic reticulum and mitochondria. Components of this complex are involved in the control of mitochondrial shape and protein biogenesis and may function in phospholipid exchange. mdm10 is involved in the late assembly steps of the general translocase of the mitochondrial outer membrane (TOM complex). Functions in the tom40-specific route of the assembly of outer membrane beta-barrel proteins, including the association of tom40 with the receptor tom22 and small TOM proteins. Can associate with the SAM(core) complex as well as the mdm12-mmm1 complex, both involved in late steps of the major beta-barrel assembly pathway, that is responsible for biogenesis of all outer membrane beta-barrel proteins. May act as a switch that shuttles between both complexes and channels precursor proteins into the tom40-specific pathway. Plays a role in mitochondrial morphology and in the inheritance of mitochondria. In Emericella nidulans (strain FGSC A4 / ATCC 38163 / CBS 112.46 / NRRL 194 / M139) (Aspergillus nidulans), this protein is Mitochondrial distribution and morphology protein 10 (mdmB).